A 289-amino-acid chain; its full sequence is 4-diphosphocytidyl-2-C-methyl-D-erythritol kinase (289 aa).

Lys10 is a catalytic residue. 94-104 (PVAAGLAGGSS) contributes to the ATP binding site. The active site involves Asp136.

This sequence belongs to the GHMP kinase family. IspE subfamily.

The enzyme catalyses 4-CDP-2-C-methyl-D-erythritol + ATP = 4-CDP-2-C-methyl-D-erythritol 2-phosphate + ADP + H(+). It participates in isoprenoid biosynthesis; isopentenyl diphosphate biosynthesis via DXP pathway; isopentenyl diphosphate from 1-deoxy-D-xylulose 5-phosphate: step 3/6. Functionally, catalyzes the phosphorylation of the position 2 hydroxy group of 4-diphosphocytidyl-2C-methyl-D-erythritol. The polypeptide is 4-diphosphocytidyl-2-C-methyl-D-erythritol kinase (Bacillus velezensis (strain DSM 23117 / BGSC 10A6 / LMG 26770 / FZB42) (Bacillus amyloliquefaciens subsp. plantarum)).